We begin with the raw amino-acid sequence, 158 residues long: Transcription factor BTF3 homolog 4 (158 aa).

The residue at position 5 (Lys-5) is an N6-methyllysine. One can recognise an NAC-A/B domain in the interval 33 to 98 (TADDKKLQSS…AEAKPITEML (66 aa)). Residue Thr-111 is modified to Phosphothreonine. A disordered region spans residues 122–158 (RQVLDSKAPKPEDIDEEDDDVPDLVENFDEASKNEAN). Residues 134 to 150 (DIDEEDDDVPDLVENFD) show a composition bias toward acidic residues.

The protein belongs to the NAC-beta family.

The chain is Transcription factor BTF3 homolog 4 (BTF3L4) from Homo sapiens (Human).